Consider the following 559-residue polypeptide: Potassium-transporting ATPase potassium-binding subunit (559 aa).

Transmembrane regions (helical) follow at residues 5-25 (GFLL…PLGS), 27-47 (LARL…RILW), 63-83 (LLAL…LLFW), 132-152 (GLTV…FALI), 170-190 (LVRI…LFFI), 253-273 (LAQM…FGEA), 283-303 (LLWA…WAEV), 327-347 (FGVL…CGAV), 356-376 (ALGG…FGGV), 379-399 (GLYG…LMIG), 416-436 (MTAL…ALAM), 484-504 (LLAF…MAIA), and 524-544 (GALF…LTFI).

It belongs to the KdpA family. In terms of assembly, the system is composed of three essential subunits: KdpA, KdpB and KdpC.

The protein resides in the cell inner membrane. Functionally, part of the high-affinity ATP-driven potassium transport (or Kdp) system, which catalyzes the hydrolysis of ATP coupled with the electrogenic transport of potassium into the cytoplasm. This subunit binds the periplasmic potassium ions and delivers the ions to the membrane domain of KdpB through an intramembrane tunnel. The sequence is that of Potassium-transporting ATPase potassium-binding subunit from Salmonella dublin (strain CT_02021853).